The chain runs to 82 residues: Probable 26S proteasome complex subunit dss-1 (82 aa).

Positions 56-82 (NWDDETHESEFSKQLKEELRKSGHQVA) are disordered. Positions 63–76 (ESEFSKQLKEELRK) are enriched in basic and acidic residues.

The protein belongs to the DSS1/SEM1 family. Part of the 26S proteasome. Expressed in intestinal epithelium and head neurons.

Its subcellular location is the nucleus. It localises to the cytoplasm. Its function is as follows. Subunit of the 26S proteasome which plays a role in ubiquitin-dependent proteolysis. Has an essential role in oogenesis and larval growth. Required for intestinal function and default lifespan. The polypeptide is Probable 26S proteasome complex subunit dss-1 (dss-1) (Caenorhabditis elegans).